A 456-amino-acid chain; its full sequence is Hydroxyproline dehydrogenase (456 aa).

N6-acetyllysine occurs at positions 310 and 320.

It belongs to the proline oxidase family. Requires FAD as cofactor.

It catalyses the reaction trans-4-hydroxy-L-proline + a quinone = (3R,5S)-1-pyrroline-3-hydroxy-5-carboxylate + a quinol + H(+). It carries out the reaction L-proline + a quinone = (S)-1-pyrroline-5-carboxylate + a quinol + H(+). Functionally, dehydrogenase that converts trans-4-L-hydroxyproline to delta-1-pyrroline-3-hydroxy-5-carboxylate (Hyp) using ubiquinone-10 as the terminal electron acceptor. Can also use proline as a substrate but with a very much lower efficiency. Does not react with other diastereomers of Hyp: trans-4-D-hydroxyproline and cis-4-L-hydroxyproline. Ubiquininone analogs such as menadione, duroquinone and ubiquinone-1 react more efficiently than oxygen as the terminal electron acceptor during catalysis. This Mus musculus (Mouse) protein is Hydroxyproline dehydrogenase.